The following is a 353-amino-acid chain: S-adenosylmethionine:tRNA ribosyltransferase-isomerase (353 aa).

The protein belongs to the QueA family. Monomer.

The protein localises to the cytoplasm. The enzyme catalyses 7-aminomethyl-7-carbaguanosine(34) in tRNA + S-adenosyl-L-methionine = epoxyqueuosine(34) in tRNA + adenine + L-methionine + 2 H(+). It functions in the pathway tRNA modification; tRNA-queuosine biosynthesis. Functionally, transfers and isomerizes the ribose moiety from AdoMet to the 7-aminomethyl group of 7-deazaguanine (preQ1-tRNA) to give epoxyqueuosine (oQ-tRNA). The sequence is that of S-adenosylmethionine:tRNA ribosyltransferase-isomerase from Maricaulis maris (strain MCS10) (Caulobacter maris).